The sequence spans 445 residues: MSYFGTDGIRGKFGQMPITPEFALKLGFAAGKVLKRTSPKNKPLVVLGKDTRLSGYILESALQAGLNAAGVYVHLLGPLPTPAIAHLTRALHAHAGIVISASHNPYFDNGIKFFSSEGKKLPDSLQEEINKELEKDLFIEDTANLGKSVRVTDANGRYIEFCKSTFPYHFDLNNLKIVVDCAHGAAYSVGPSVFRELGAKVVALYNEPDGLNINENCGSTHPESLQKAVVEHGADLGIAFDGDADRVVMVDKFGNLIDGDHILYILATQAKNKPAGVVGTVMSNMALEVALEKANVGFVRAKVGDRYVLQALEENGWVTGGEPSGHILTLDKSTTGDAIIAALQVLTVMVEQNKALHELVNGFKLYPQVLVNVRLEQMLDPYSIPALVAEFNKAEEQLKGRGRILIRKSGTEPVIRVMVEGDNEQEVKTLAEHLANAVRSQAQVA.

Ser-102 functions as the Phosphoserine intermediate in the catalytic mechanism. The Mg(2+) site is built by Ser-102, Asp-241, Asp-243, and Asp-245. Ser-102 carries the phosphoserine modification.

This sequence belongs to the phosphohexose mutase family. It depends on Mg(2+) as a cofactor. Post-translationally, activated by phosphorylation.

It catalyses the reaction alpha-D-glucosamine 1-phosphate = D-glucosamine 6-phosphate. In terms of biological role, catalyzes the conversion of glucosamine-6-phosphate to glucosamine-1-phosphate. The sequence is that of Phosphoglucosamine mutase from Acinetobacter baumannii (strain AB0057).